Consider the following 507-residue polypeptide: Probable cytosol aminopeptidase (507 aa).

Lysine 269 and aspartate 274 together coordinate Mn(2+). Lysine 281 is an active-site residue. Mn(2+) is bound by residues aspartate 292, aspartate 351, and glutamate 353. The active site involves arginine 355.

This sequence belongs to the peptidase M17 family. The cofactor is Mn(2+).

Its subcellular location is the cytoplasm. The enzyme catalyses Release of an N-terminal amino acid, Xaa-|-Yaa-, in which Xaa is preferably Leu, but may be other amino acids including Pro although not Arg or Lys, and Yaa may be Pro. Amino acid amides and methyl esters are also readily hydrolyzed, but rates on arylamides are exceedingly low.. The catalysed reaction is Release of an N-terminal amino acid, preferentially leucine, but not glutamic or aspartic acids.. In terms of biological role, presumably involved in the processing and regular turnover of intracellular proteins. Catalyzes the removal of unsubstituted N-terminal amino acids from various peptides. The chain is Probable cytosol aminopeptidase from Chromohalobacter salexigens (strain ATCC BAA-138 / DSM 3043 / CIP 106854 / NCIMB 13768 / 1H11).